The following is a 677-amino-acid chain: DNA polymerase epsilon subunit B (677 aa).

It belongs to the DNA polymerase epsilon subunit B family. In terms of assembly, heterotetramer. Consists of four subunits: POL2, DPB2, DPB3 and DPB4.

The protein localises to the nucleus. In terms of biological role, as accessory component of the DNA polymerase epsilon (DNA polymerase II) participates in chromosomal DNA replication. This is DNA polymerase epsilon subunit B (DPB2) from Eremothecium gossypii (strain ATCC 10895 / CBS 109.51 / FGSC 9923 / NRRL Y-1056) (Yeast).